Reading from the N-terminus, the 149-residue chain is 1,4-dihydroxy-2-naphthoyl-CoA hydrolase (149 aa).

Aspartate 19 is a catalytic residue.

It belongs to the 4-hydroxybenzoyl-CoA thioesterase family. DHNA-CoA hydrolase subfamily.

It catalyses the reaction 1,4-dihydroxy-2-naphthoyl-CoA + H2O = 1,4-dihydroxy-2-naphthoate + CoA + H(+). The protein operates within cofactor biosynthesis; phylloquinone biosynthesis. It participates in quinol/quinone metabolism; 1,4-dihydroxy-2-naphthoate biosynthesis; 1,4-dihydroxy-2-naphthoate from chorismate: step 7/7. In terms of biological role, catalyzes the hydrolysis of 1,4-dihydroxy-2-naphthoyl-CoA (DHNA-CoA) to 1,4-dihydroxy-2-naphthoate (DHNA), a reaction involved in phylloquinone (vitamin K1) biosynthesis. This is 1,4-dihydroxy-2-naphthoyl-CoA hydrolase from Synechococcus sp. (strain CC9902).